The primary structure comprises 473 residues: Adenosylhomocysteinase (473 aa).

Residues 58 to 62 (HMTIQ), Asp135, and Glu197 each bind substrate. 198–200 (TTT) is a binding site for NAD(+). The substrate site is built by Lys227 and Asp231. Residues Asn232, Val265, Glu284, Asn319, 340–342 (IGH), and Asn385 each bind NAD(+). His342 serves as a coordination point for substrate. His392 contacts substrate. Lys467 and Tyr471 together coordinate NAD(+).

Belongs to the adenosylhomocysteinase family. In terms of assembly, homotetramer; dimer of dimers. NAD(+) is required as a cofactor.

The protein resides in the cytoplasm. The catalysed reaction is S-adenosyl-L-homocysteine + H2O = L-homocysteine + adenosine. The protein operates within amino-acid biosynthesis; L-homocysteine biosynthesis; L-homocysteine from S-adenosyl-L-homocysteine: step 1/1. May play a key role in the regulation of the intracellular concentration of adenosylhomocysteine, which is a strong inhibitor of SAM-dependent methyltransferases. Catalyzes the hydrolysis of S-adenosyl-L-homocysteine into L-homocysteine and adenosine. This is Adenosylhomocysteinase from Bradyrhizobium elkanii.